A 723-amino-acid polypeptide reads, in one-letter code: Fatty acid oxidation complex subunit alpha (723 aa).

The segment at 1–189 is enoyl-CoA hydratase/isomerase; it reads MIYQAKTLQV…KVGLLDAIVD (189 aa). Residue aspartate 296 coordinates substrate. A 3-hydroxyacyl-CoA dehydrogenase region spans residues 311 to 723; that stretch reads SQDTQHAAVL…FYSAQQVSAL (413 aa). NAD(+) contacts are provided by residues methionine 325, aspartate 344, 401-403, lysine 408, and serine 430; that span reads VVE. Histidine 451 (for 3-hydroxyacyl-CoA dehydrogenase activity) is an active-site residue. Asparagine 454 contacts NAD(+). Substrate is bound by residues asparagine 501 and tyrosine 661.

This sequence in the N-terminal section; belongs to the enoyl-CoA hydratase/isomerase family. In the C-terminal section; belongs to the 3-hydroxyacyl-CoA dehydrogenase family. As to quaternary structure, heterotetramer of two alpha chains (FadB) and two beta chains (FadA).

The enzyme catalyses a (3S)-3-hydroxyacyl-CoA + NAD(+) = a 3-oxoacyl-CoA + NADH + H(+). It carries out the reaction a (3S)-3-hydroxyacyl-CoA = a (2E)-enoyl-CoA + H2O. It catalyses the reaction a 4-saturated-(3S)-3-hydroxyacyl-CoA = a (3E)-enoyl-CoA + H2O. The catalysed reaction is (3S)-3-hydroxybutanoyl-CoA = (3R)-3-hydroxybutanoyl-CoA. The enzyme catalyses a (3Z)-enoyl-CoA = a 4-saturated (2E)-enoyl-CoA. It carries out the reaction a (3E)-enoyl-CoA = a 4-saturated (2E)-enoyl-CoA. It functions in the pathway lipid metabolism; fatty acid beta-oxidation. Its function is as follows. Involved in the aerobic and anaerobic degradation of long-chain fatty acids via beta-oxidation cycle. Catalyzes the formation of 3-oxoacyl-CoA from enoyl-CoA via L-3-hydroxyacyl-CoA. It can also use D-3-hydroxyacyl-CoA and cis-3-enoyl-CoA as substrate. This is Fatty acid oxidation complex subunit alpha from Vibrio cholerae serotype O1 (strain ATCC 39315 / El Tor Inaba N16961).